We begin with the raw amino-acid sequence, 161 residues long: V-type proton ATPase 16 kDa proteolipid subunit c 2 (161 aa).

Topologically, residues 1-15 (MSYDLETAEHAAYAP) are lumenal. Residues 16-36 (FFGYMGAASAQIFTVLGAAYG) form a helical membrane-spanning segment. The Cytoplasmic portion of the chain corresponds to 37–58 (TAKSAVGICSMGVMRPELIMKS). The chain crosses the membrane as a helical span at residues 59 to 79 (VIPVIMAGIIGIYGLVVAMVL). The Lumenal portion of the chain corresponds to 80-98 (KGKVQAASAGYDLNKGFAH). A helical membrane pass occupies residues 99 to 119 (LAAGLTCGLCGLGAGYAIGIV). The Cytoplasmic segment spans residues 120–137 (GDAGVRGTAQQPRLFVGM). The chain crosses the membrane as a helical span at residues 138–158 (ILILIFSEVLGLYGMIVALIL). The Lumenal portion of the chain corresponds to 159-161 (GTS).

It belongs to the V-ATPase proteolipid subunit family. V-ATPase is a heteromultimeric enzyme made up of two complexes: the ATP-hydrolytic V1 complex and the proton translocation V0 complex. The V1 complex consists of three catalytic AB heterodimers that form a heterohexamer, three peripheral stalks each consisting of EG heterodimers, one central rotor including subunits D and F, and the regulatory subunits C and H. The proton translocation complex V0 consists of the proton transport subunit a, a ring of proteolipid subunits c9c'', rotary subunit d, subunits e and f, and the accessory subunits vah-19/Ac45 and vah-20/PRR.

It is found in the membrane. In terms of biological role, proton-conducting pore forming subunit of the V0 complex of vacuolar(H+)-ATPase (V-ATPase), a multisubunit enzyme composed of a peripheral complex (V1) that hydrolyzes ATP and a membrane integral complex (V0) that translocates protons. V-ATPase is responsible for acidifying and maintaining the pH of intracellular compartments and in some cell types, is targeted to the plasma membrane, where it is responsible for acidifying the extracellular environment. Involved in necrotic cell death. Required along with other vacuolar ATPase components for the removal of protein aggregates which form in immature oocytes in the distal gonad. This removal occurs as the oocytes mature and move to the proximal gonad, is triggered by the introduction of sperm through mating and occurs before fertilization. The introduction of sperm triggers V-ATPase accumulation in proximal oocytes and induces lysosomal acidification which leads to engulfing of protein aggregates by lysosomes and subsequent clearance of the aggregates. Lysosomal acidification also leads to changes in mitochondrial morphology and function. Mitochondria in distal immature oocytes are fragmented, produce high levels of reactive oxygen species (ROS) and have high membrane potential, indicative of metabolic inactivity. In contrast, mitochondria in proximal mature oocytes are tubular with lower ROS levels and membrane potential, indicative of an active metabolic state required for aggregate mobilization before clearance. The chain is V-type proton ATPase 16 kDa proteolipid subunit c 2 from Caenorhabditis briggsae.